A 55-amino-acid polypeptide reads, in one-letter code: Large ribosomal subunit protein bL33 (55 aa).

This sequence belongs to the bacterial ribosomal protein bL33 family.

The sequence is that of Large ribosomal subunit protein bL33 from Bordetella pertussis (strain Tohama I / ATCC BAA-589 / NCTC 13251).